Reading from the N-terminus, the 196-residue chain is Calcium channel flower (196 aa).

The next 3 membrane-spanning stretches (helical) occupy residues leucine 35 to isoleucine 55, leucine 70 to serine 92, and alanine 113 to phenylalanine 133.

It belongs to the calcium channel flower family. Homomultimer. Associates with the dally/ magu complex.

The protein resides in the cell membrane. Its subcellular location is the cytoplasmic vesicle. The protein localises to the secretory vesicle. It is found in the synaptic vesicle membrane. It localises to the presynaptic cell membrane. The protein resides in the endosome. With respect to regulation, channel activity is inhibited by La(3+), which reduces Ca(2+) influx and thus inhibits it's function in promoting activity-dependent bulk endocytosis (ADBE) in response to high stimuli. Transmembrane protein which mediates synaptic endocytosis, fitness-based cell culling, neuronal culling, morphogen gradient scaling, and calcium transport. Regulates synaptic endocytosis and hence couples exo- with endocytosis. Controls two major modes of synaptic vesicle (SV) endocytosis in the synaptic boutons of neuromuscular junctions (NMJs); Ca(2+) channel-independent Clathrin-mediated endocytosis (CME) in response to mild stimulation, and Ca(2+) channel-dependent activity-dependent bulk endocytosis (ADBE) in response to strong stimulation. Functions in ADBE and subsequent SV reformation from bulk endosomes by initiating Ca(2+) channel-dependent phosphatidylinositol 4,5-bisphosphate (PtdIns(4,5)P2) compartmentalization in synaptic boutons. There it acts at the periactive zone to provide the low Ca(2+) levels required to initiate Calcineurin activation and upregulate PtdIns(4,5)P2. Conversely PtdIns(4,5)P2 enhances fwe Ca(2+) channel-activity, establishing a positive feedback loop that induces PtdIns(4,5)P2 microdomain at the periactive zone. These microdomains trigger bulk membrane invagination (i.e. ADBE) by triggering actin polymerization while also promoting localization of fwe to bulk endosomes, thereby removing the ADBE trigger to reduce endocytosis and prevent excess membrane uptake. PtdIns(4,5)P2 then promotes SV reformation from the bulk endosomes, to coordinate ADBE and subsequent SV reformation. Different combinations of the flower isoforms at the cell membrane are also required for the identification and elimination of suboptimal or supernumerary cells during development, regeneration, and adulthood. Required for the recognition and elimination of unfit cells in the developing wing during cell competition. In the developing pupal retina, mediates the elimination of unwanted postmitotic neurons, including supernumerary photoreceptor neurons that form at the periphery of the retina and are contained within incomplete ommatidia units. Also required for efficient elimination and replacement of old neurons by newly generated neurons during regeneration in the adult brain following mechanical injury. Downstream of the flower fitness fingerprints, cells identified as unwanted or unfit are eliminated via apoptosis through the expression of ahuizotl (azot). However, the cells marked for elimination by the flower isoforms only undergo apoptosis if additional thresholds are met; (1) their neighboring fit/healthy cells express different levels of the fwe isoforms, and (2) the levels of the protective signal SPARC expressed by the loser or unwanted cells are unable to inhibit caspase activation. These additional thresholds for flower-mediated apoptosis, allows useful cells to recover from transient and limited stress before they are unnecessarily eliminated. Functions with dally and magu in a mechanism of scaling, which utilises apoptosis to ensure that the dpp morphogen gradient, which mediates organ growth, remains proportional to the size of the growing wing. In this mechanism, fwe represses dally- and Magu-dependent activity in expanding the gradient, and dally/Magu inhibits fwe-dependent apoptosis to keep cell death rate low. When the levels of these different proteins are optimally regulated the gradient correctly scales with organ growth but when this fails, fwe-mediated apoptosis is activated to trim the developing tissue to match the correct size of the gradient. In Drosophila grimshawi (Hawaiian fruit fly), this protein is Calcium channel flower.